Reading from the N-terminus, the 510-residue chain is Glutamyl-tRNA(Gln) amidotransferase subunit A (510 aa).

Catalysis depends on charge relay system residues Lys-82 and Ser-157. Ser-181 acts as the Acyl-ester intermediate in catalysis.

It belongs to the amidase family. GatA subfamily. As to quaternary structure, heterotrimer of A, B and C subunits.

The catalysed reaction is L-glutamyl-tRNA(Gln) + L-glutamine + ATP + H2O = L-glutaminyl-tRNA(Gln) + L-glutamate + ADP + phosphate + H(+). Allows the formation of correctly charged Gln-tRNA(Gln) through the transamidation of misacylated Glu-tRNA(Gln) in organisms which lack glutaminyl-tRNA synthetase. The reaction takes place in the presence of glutamine and ATP through an activated gamma-phospho-Glu-tRNA(Gln). This Bordetella avium (strain 197N) protein is Glutamyl-tRNA(Gln) amidotransferase subunit A.